A 364-amino-acid polypeptide reads, in one-letter code: Triacylglycerol lipase (364 aa).

The first 44 residues, 1–44 (MARTMRSRVVAGAVACAMSIAPFAGTTAVMTLATTHAAMAATAP), serve as a signal peptide directing secretion. An AB hydrolase-1 domain is found at 54–266 (PIILVHGLSG…AIQPTLSVFG (213 aa)). Leucine 61 lines the substrate pocket. The active-site Nucleophile is serine 131. Residue glutamine 132 participates in substrate binding. Cysteine 234 and cysteine 314 are disulfide-bonded. Aspartate 286 contributes to the Ca(2+) binding site. Residues aspartate 308 and histidine 330 each act as charge relay system in the active site. Positions 332, 336, and 340 each coordinate Ca(2+).

The protein belongs to the AB hydrolase superfamily. Pseudomonas lipase family. As to quaternary structure, monomer. Requires Ca(2+) as cofactor.

The protein resides in the secreted. It carries out the reaction a triacylglycerol + H2O = a diacylglycerol + a fatty acid + H(+). Inhibited by RC-(Rp,Sp)- and SC-(Rp,Sp)-1,2-dioctylcarbamoylglycero-3-O-p-nitrophenyl octylphosphonate. Also inhibited by diethyl-p-nitrophenylphosphate (E600). Its function is as follows. Catalyzes the hydrolysis of triacylglycerol. It shows a preference for triacylglycerols with a chain length between 6 and 12 carbons. In Burkholderia cepacia (Pseudomonas cepacia), this protein is Triacylglycerol lipase.